Reading from the N-terminus, the 116-residue chain is Putative anti-sigma factor antagonist BtrV (116 aa).

One can recognise an STAS domain in the interval 1–110 (MKLTMDKIDG…NSREAAAAAF (110 aa)). A Phosphoserine; by BtrW modification is found at Ser55.

This sequence belongs to the anti-sigma-factor antagonist family. As to quaternary structure, interacts with BtrW. Post-translationally, phosphorylated by BtrW. Dephosphorylated by BtrU.

Possible positive regulator of sigma-B activity. Non-phosphorylated BtrV binds to BtrW, preventing its association with an unknown partner(s) that might be sigma-B. When phosphorylated, releases BtrW, which is then free to complex with and inactivate its partner. Involved in type III secretion system (T3SS). The chain is Putative anti-sigma factor antagonist BtrV (btrV) from Bordetella bronchiseptica (strain ATCC BAA-588 / NCTC 13252 / RB50) (Alcaligenes bronchisepticus).